Reading from the N-terminus, the 217-residue chain is Thiamine-phosphate synthase (217 aa).

4-amino-2-methyl-5-(diphosphooxymethyl)pyrimidine contacts are provided by residues 39-43 (QLRRK) and Asn-71. Asp-72 and Asp-91 together coordinate Mg(2+). Ser-110 serves as a coordination point for 4-amino-2-methyl-5-(diphosphooxymethyl)pyrimidine. A 2-[(2R,5Z)-2-carboxy-4-methylthiazol-5(2H)-ylidene]ethyl phosphate-binding site is contributed by 137-139 (SPT). A 4-amino-2-methyl-5-(diphosphooxymethyl)pyrimidine-binding site is contributed by Lys-140. 2-[(2R,5Z)-2-carboxy-4-methylthiazol-5(2H)-ylidene]ethyl phosphate contacts are provided by residues Gly-173 and 193–194 (IS).

It belongs to the thiamine-phosphate synthase family. It depends on Mg(2+) as a cofactor.

It carries out the reaction 2-[(2R,5Z)-2-carboxy-4-methylthiazol-5(2H)-ylidene]ethyl phosphate + 4-amino-2-methyl-5-(diphosphooxymethyl)pyrimidine + 2 H(+) = thiamine phosphate + CO2 + diphosphate. The catalysed reaction is 2-(2-carboxy-4-methylthiazol-5-yl)ethyl phosphate + 4-amino-2-methyl-5-(diphosphooxymethyl)pyrimidine + 2 H(+) = thiamine phosphate + CO2 + diphosphate. It catalyses the reaction 4-methyl-5-(2-phosphooxyethyl)-thiazole + 4-amino-2-methyl-5-(diphosphooxymethyl)pyrimidine + H(+) = thiamine phosphate + diphosphate. The protein operates within cofactor biosynthesis; thiamine diphosphate biosynthesis; thiamine phosphate from 4-amino-2-methyl-5-diphosphomethylpyrimidine and 4-methyl-5-(2-phosphoethyl)-thiazole: step 1/1. Condenses 4-methyl-5-(beta-hydroxyethyl)thiazole monophosphate (THZ-P) and 2-methyl-4-amino-5-hydroxymethyl pyrimidine pyrophosphate (HMP-PP) to form thiamine monophosphate (TMP). The polypeptide is Thiamine-phosphate synthase (Bordetella parapertussis (strain 12822 / ATCC BAA-587 / NCTC 13253)).